The chain runs to 583 residues: MSLWELEDRRSCQGTPRPAQEPTAEEATTAELQMKVDFFRKLGYSSAEIHSVLQKLGIQADTNTVLGELVKHGSAAERERQASPDPCPQLPLVPRGGGTPKAPTVETYPPEEDKEGSDLRPIVIDGSNVAMSHGNKDVFSCRGILLAVNWFLERGHTDITVFVPSWRKEQPRPDVPITDQHILRDLEKKKILVFTPSRRVGGKRVVCYDDRFIVKLAFESDGIVVSNDTYRDLQGERQEWKRFIEERLLMYSFVNDKFMPPDDPLGRHGPSLDNFLRKKPLTSEHKKQPCPYGRKCTYGIKCRFLHPERPSRPQRSVADELRANALLPPSRAASKDKNSRRPSPSSQPGSLPTEHEQCSPDRKKLGAQASPGTPREGLMQTFAPTGRSLPPSGSSGGSFGPSEWFPQTLDSLPYASQDCLDSGIGSLESQMSELWGVRGGGPGEPGPPRGPYAGYCTYGAELPATPAFSAFSRALGAGHFSVPADYAPPPAAFPPREYWSEPYQLPPPTQRLQEPQAPGPGADRGPWGGAGRLAKERASVYTKLCGVFPPHLVEAVMSRFPQLLDPQQLAAEILSYKSQHLSE.

The segment covering Met-1–Ser-11 has biased composition (basic and acidic residues). Disordered regions lie at residues Met-1–Thr-29 and Gly-73–Leu-119. Low complexity predominate over residues Thr-15–Thr-29. The segment at Glu-26–Lys-71 is ubiquitin association domain. The interval Val-65–Gly-134 is necessary for interaction with TANK. Residues Gly-73 to Ala-82 show a composition bias toward basic and acidic residues. Ser-83 bears the Phosphoserine mark. The RNase stretch occupies residues Gly-96–Leu-281. Positions Leu-119 to Asn-274 constitute an RNase NYN domain. The tract at residues Arg-198 to Arg-204 is RNA binding. Asp-210 contacts Mg(2+). Disordered regions lie at residues Asp-262–Cys-290 and Ala-323–Trp-404. The C3H1-type zinc finger occupies Glu-284–Arg-309. The interval His-285–Gly-441 is necessary for interaction with ZC3H12D. The span at Arg-341–Pro-352 shows a compositional bias: low complexity. Over residues Thr-353 to Lys-364 the composition is skewed to basic and acidic residues. The span at Pro-384 to Gly-393 shows a compositional bias: low complexity. 2 positions are modified to phosphoserine: Ser-422 and Ser-426. The segment at Tyr-503 to Ala-530 is disordered.

Belongs to the ZC3H12 family. In terms of assembly, oligomer. Found in a deubiquitination complex with TANK, USP10 and ZC3H12A; this complex inhibits genotoxic stress- or interleukin-1-beta-mediated NF-kappaB activation by promoting IKBKG or TRAF6 deubiquitination. Interacts with IKBKG; this interaction increases in response to DNA damage. Interacts with TANK; this interaction increases in response to DNA damage and serves as a bridge to anchor both TANK and USP10 into a deubiquitinating complex. Interacts with TRAF6; this interaction increases in response to DNA damage and is stimulated by TANK. Interacts with USP10; this interaction increases in response to DNA damage and serves as a bridge to anchor both TANK and USP10 into a deubiquitinating complex. Interacts with ZC3H12D. Interacts with TNRC6A. Interacts with IKBKB/IKKB. Interacts with IKBKB/IKKB. Interacts with BTRC; the interaction occurs when ZC3H12A is phosphorylated in a IKBKB/IKKB-dependent manner. Interacts with IRAK1; this interaction increases the interaction between ZC3H12A and IKBKB/IKKB. Interacts with UPF1; this interaction occurs in a mRNA translationally active- and termination-dependent manner and is essential for ZC3H12A-mediated degradation of target mRNAs. Associates with ribosomes. Interacts with ubiquitin. Mg(2+) serves as cofactor. Post-translationally, phosphorylated by IRAK1; phosphorylation is necessary for subsequent phosphorylation by the I-kappa-B-kinase (IKK) complex. Phosphorylated by I-kappa-B-kinase (IKK) subunits IKBKB/IKKB and CHUK/IKKA at Ser-422 and Ser-426; these phosphorylations promote ubiquitin proteasome-mediated degradation of ZC3H12A and hence facilitates rapid and robust production of IL-6 mRNA in response to toll-like receptor (TLR) or IL-1 receptor stimuli. In terms of processing, ubiquitinated; ubiquitination is induced in response to interleukin IL1 receptor stimuli in a IKBKB/IKKB and IRAK1-dependent manner, leading to proteasome-mediated degradation. Proteolytically cleaved between Arg-95 and Arg-198 by MALT1 in activated T-cells; cleavage at Arg-95 is critical for promoting ZC3H12A degradation in response to T-cell receptor (TCR) stimulation, and hence is necessary for prolonging the stability of a set of mRNAs controlling T-cell activation and Th17 cell differentiation.

Its subcellular location is the nucleus. It is found in the cytoplasm. The protein resides in the P-body. The protein localises to the rough endoplasmic reticulum membrane. It localises to the cytoplasmic granule. Functionally, endoribonuclease involved in various biological functions such as cellular inflammatory response and immune homeostasis, glial differentiation of neuroprogenitor cells, cell death of cardiomyocytes, adipogenesis and angiogenesis. Functions as an endoribonuclease involved in mRNA decay. Modulates the inflammatory response by promoting the degradation of a set of translationally active cytokine-induced inflammation-related mRNAs, such as IL6 and IL12B, during the early phase of inflammation. Prevents aberrant T-cell-mediated immune reaction by degradation of multiple mRNAs controlling T-cell activation, such as those encoding cytokines (IL6 and IL2), cell surface receptors (ICOS, TNFRSF4 and TNFR2) and transcription factor (REL). Inhibits cooperatively with ZC3H12A the differentiation of helper T cells Th17 in lungs. They repress target mRNA encoding the Th17 cell-promoting factors IL6, ICOS, REL, IRF4, NFKBID and NFKBIZ. The cooperation requires RNA-binding by RC3H1 and the nuclease activity of ZC3H12A. Together with RC3H1, destabilizes TNFRSF4/OX40 mRNA by binding to the conserved stem loop structure in its 3'UTR. Self regulates by destabilizing its own mRNA. Cleaves mRNA harboring a stem-loop (SL), often located in their 3'-UTRs, during the early phase of inflammation in a helicase UPF1-dependent manner. Plays a role in the inhibition of microRNAs (miRNAs) biogenesis. Cleaves the terminal loop of a set of precursor miRNAs (pre-miRNAs) important for the regulation of the inflammatory response leading to their degradation, and thus preventing the biosynthesis of mature miRNAs. Also plays a role in promoting angiogenesis in response to inflammatory cytokines by inhibiting the production of antiangiogenic microRNAs via its anti-dicer RNase activity. Affects the overall ubiquitination of cellular proteins. Positively regulates deubiquitinase activity promoting the cleavage at 'Lys-48'- and 'Lys-63'-linked polyubiquitin chains on TNF receptor-associated factors (TRAFs), preventing JNK and NF-kappa-B signaling pathway activation, and hence negatively regulating macrophage-mediated inflammatory response and immune homeostasis. Also induces deubiquitination of the transcription factor HIF1A, probably leading to its stabilization and nuclear import, thereby positively regulating the expression of proangiogenic HIF1A-targeted genes. Involved in a TANK-dependent negative feedback response to attenuate NF-kappaB activation through the deubiquitination of IKBKG or TRAF6 in response to interleukin-1-beta (IL1B) stimulation or upon DNA damage. Prevents stress granules (SGs) formation and promotes macrophage apoptosis under stress conditions, including arsenite-induced oxidative stress, heat shock, and energy deprivation. Plays a role in the regulation of macrophage polarization; promotes IL4-induced polarization of macrophages M1 into anti-inflammatory M2 state. May also act as a transcription factor that regulates the expression of multiple genes involved in inflammatory response, angiogenesis, adipogenesis and apoptosis. Functions as a positive regulator of glial differentiation of neuroprogenitor cells through an amyloid precursor protein (APP)-dependent signaling pathway. Attenuates septic myocardial contractile dysfunction in response to lipopolysaccharide (LPS) by reducing I-kappa-B-kinase (IKK)-mediated NF-kappa-B activation, and hence myocardial pro-inflammatory cytokine production. In Bos taurus (Bovine), this protein is Ribonuclease ZC3H12A.